Reading from the N-terminus, the 752-residue chain is DNA ligase (752 aa).

Residues 1 to 25 (MKRNGFVPSNSVGRRGIPSNSTSSA) form a disordered region. NAD(+)-binding positions include 91–95 (DADFD), 140–141 (SL), and Glu170. Catalysis depends on Lys172, which acts as the N6-AMP-lysine intermediate. NAD(+) is bound by residues Arg193, Glu233, Lys350, and Lys374. Residues Cys474, Cys477, Cys493, and Cys499 each contribute to the Zn(2+) site. A BRCT domain is found at 669–752 (STPRTLAGLT…TLLDGGPAAL (84 aa)).

Belongs to the NAD-dependent DNA ligase family. LigA subfamily. It depends on Mg(2+) as a cofactor. The cofactor is Mn(2+).

It catalyses the reaction NAD(+) + (deoxyribonucleotide)n-3'-hydroxyl + 5'-phospho-(deoxyribonucleotide)m = (deoxyribonucleotide)n+m + AMP + beta-nicotinamide D-nucleotide.. DNA ligase that catalyzes the formation of phosphodiester linkages between 5'-phosphoryl and 3'-hydroxyl groups in double-stranded DNA using NAD as a coenzyme and as the energy source for the reaction. It is essential for DNA replication and repair of damaged DNA. This is DNA ligase from Nocardioides sp. (strain ATCC BAA-499 / JS614).